A 482-amino-acid polypeptide reads, in one-letter code: Glycogen synthase (482 aa).

Lys-20 provides a ligand contact to ADP-alpha-D-glucose.

This sequence belongs to the glycosyltransferase 1 family. Bacterial/plant glycogen synthase subfamily.

It catalyses the reaction [(1-&gt;4)-alpha-D-glucosyl](n) + ADP-alpha-D-glucose = [(1-&gt;4)-alpha-D-glucosyl](n+1) + ADP + H(+). The protein operates within glycan biosynthesis; glycogen biosynthesis. In terms of biological role, synthesizes alpha-1,4-glucan chains using ADP-glucose. The protein is Glycogen synthase of Aliivibrio salmonicida (strain LFI1238) (Vibrio salmonicida (strain LFI1238)).